Consider the following 139-residue polypeptide: MLRKTNLSNITTLLRSARCMNRMPQLRFEHTKGDLKRVNRSYETRDAMLARLKYQSRKRGILETDLLLSNFAKDQIDKYPVSLLREYDQLLDEPDWDILYWCSGEREAPEKWKSSQVFKELSKYCRSQRNHTLRMPELF.

A mitochondrion-targeting transit peptide spans 1–28 (MLRKTNLSNITTLLRSARCMNRMPQLRF).

This sequence belongs to the SDHAF2 family. Interacts with the flavoprotein subunit within the SDH catalytic dimer.

The protein localises to the mitochondrion. It localises to the mitochondrion matrix. In terms of biological role, plays an essential role in the assembly of succinate dehydrogenase (SDH), an enzyme complex (also referred to as respiratory complex II) that is a component of both the tricarboxylic acid (TCA) cycle and the mitochondrial electron transport chain, and which couples the oxidation of succinate to fumarate with the reduction of ubiquinone (coenzyme Q) to ubiquinol. Required for flavinylation (covalent attachment of FAD) of the flavoprotein subunit of the SDH catalytic dimer. This chain is Succinate dehydrogenase assembly factor 2, mitochondrial, found in Schizosaccharomyces pombe (strain 972 / ATCC 24843) (Fission yeast).